The sequence spans 127 residues: MTIFQGKSGKKPTGGNLKQAKKKRRFELGREPTLTKLGTKVERKVIRTMGGNSKAILFTADTANVYDIHEKKIKKVKIITVKENPANSHYVQRNIINKGTIISTEIGEAIVTSRPGQDGVINAKLLN.

Residues 1 to 25 (MTIFQGKSGKKPTGGNLKQAKKKRR) are disordered.

The protein belongs to the eukaryotic ribosomal protein eS8 family. As to quaternary structure, part of the 30S ribosomal subunit.

The sequence is that of Small ribosomal subunit protein eS8 from Thermoplasma volcanium (strain ATCC 51530 / DSM 4299 / JCM 9571 / NBRC 15438 / GSS1).